The primary structure comprises 153 residues: UPF0158 protein PA5073 (153 aa).

Belongs to the UPF0158 family.

The sequence is that of UPF0158 protein PA5073 from Pseudomonas aeruginosa (strain ATCC 15692 / DSM 22644 / CIP 104116 / JCM 14847 / LMG 12228 / 1C / PRS 101 / PAO1).